The primary structure comprises 109 residues: Class I hydrophobin SC1 (109 aa).

Positions 1–22 (MRFSLAILALPVLAAATAVPRG) are cleaved as a signal peptide. 4 disulfides stabilise this stretch: Cys27-Cys88, Cys34-Cys82, Cys35-Cys69, and Cys89-Cys102.

The protein belongs to the fungal hydrophobin family. Self-assembles to form functional amyloid fibrils called rodlets. Self-assembly into fibrillar rodlets occurs spontaneously at hydrophobic:hydrophilic interfaces and the rodlets further associate laterally to form amphipathic monolayers.

The protein localises to the secreted. It is found in the cell wall. Functionally, aerial growth, conidiation, and dispersal of filamentous fungi in the environment rely upon a capability of their secreting small amphipathic proteins called hydrophobins (HPBs) with low sequence identity. Class I can self-assemble into an outermost layer of rodlet bundles on aerial cell surfaces, conferring cellular hydrophobicity that supports fungal growth, development and dispersal; whereas Class II form highly ordered films at water-air interfaces through intermolecular interactions but contribute nothing to the rodlet structure. SC1 is a dikaryon-specific class I hydrophobin that contributes to the formation of aerial hyphae and fruiting bodies. The sequence is that of Class I hydrophobin SC1 from Schizophyllum commune (Split gill fungus).